A 287-amino-acid chain; its full sequence is Phosphate transport system permease protein PstA (287 aa).

The next 6 helical transmembrane spans lie at 22–42 (ISCI…WTLI), 70–90 (AFLG…PVGI), 115–135 (ILLS…YVMH), 138–158 (GHFS…PIVV), 199–219 (ILTG…PLLF), and 255–275 (LLAW…SLGA). Positions 71–279 (FLGSAIMCLL…LVSLGARALL (209 aa)) constitute an ABC transmembrane type-1 domain.

This sequence belongs to the binding-protein-dependent transport system permease family. CysTW subfamily.

The protein resides in the cell inner membrane. Part of a binding-protein-dependent transport system for phosphate; probably responsible for the translocation of the substrate across the membrane. This chain is Phosphate transport system permease protein PstA (pstA), found in Xylella fastidiosa (strain Temecula1 / ATCC 700964).